The primary structure comprises 515 residues: Bifunctional purine biosynthesis protein PurH (515 aa).

The 145-residue stretch at 1-145 folds into the MGS-like domain; that stretch reads MTKRALISVS…KNHASVTVVV (145 aa).

The protein belongs to the PurH family.

The enzyme catalyses (6R)-10-formyltetrahydrofolate + 5-amino-1-(5-phospho-beta-D-ribosyl)imidazole-4-carboxamide = 5-formamido-1-(5-phospho-D-ribosyl)imidazole-4-carboxamide + (6S)-5,6,7,8-tetrahydrofolate. It catalyses the reaction IMP + H2O = 5-formamido-1-(5-phospho-D-ribosyl)imidazole-4-carboxamide. The protein operates within purine metabolism; IMP biosynthesis via de novo pathway; 5-formamido-1-(5-phospho-D-ribosyl)imidazole-4-carboxamide from 5-amino-1-(5-phospho-D-ribosyl)imidazole-4-carboxamide (10-formyl THF route): step 1/1. It functions in the pathway purine metabolism; IMP biosynthesis via de novo pathway; IMP from 5-formamido-1-(5-phospho-D-ribosyl)imidazole-4-carboxamide: step 1/1. This Streptococcus gordonii (strain Challis / ATCC 35105 / BCRC 15272 / CH1 / DL1 / V288) protein is Bifunctional purine biosynthesis protein PurH.